Reading from the N-terminus, the 670-residue chain is Acetyl-coenzyme A synthetase (670 aa).

CoA is bound by residues 211-214 and Thr-329; that span reads RGGK. ATP is bound by residues 404-406, 428-433, Asp-519, and Arg-534; these read GEP and DTYWQT. Ser-542 is a binding site for CoA. Arg-545 is an ATP binding site. Arg-603 serves as a coordination point for CoA.

This sequence belongs to the ATP-dependent AMP-binding enzyme family.

The catalysed reaction is acetate + ATP + CoA = acetyl-CoA + AMP + diphosphate. The chain is Acetyl-coenzyme A synthetase (facA) from Emericella nidulans (strain FGSC A4 / ATCC 38163 / CBS 112.46 / NRRL 194 / M139) (Aspergillus nidulans).